Here is a 196-residue protein sequence, read N- to C-terminus: Vascular-related unknown protein 2 (196 aa).

Residues 84 to 130 form a disordered region; sequence ANNINTNPKKRRIIHQHKEEEEEELQKGEEEEEDEEDTASSPSNKTK. Acidic residues predominate over residues 103-121; the sequence is EEEEELQKGEEEEEDEEDT.

In terms of biological role, involved in the regulation of plant growth. This chain is Vascular-related unknown protein 2, found in Arabidopsis thaliana (Mouse-ear cress).